Reading from the N-terminus, the 465-residue chain is ATP synthase subunit beta (465 aa).

155 to 162 provides a ligand contact to ATP; it reads GGAGVGKT.

It belongs to the ATPase alpha/beta chains family. As to quaternary structure, F-type ATPases have 2 components, CF(1) - the catalytic core - and CF(0) - the membrane proton channel. CF(1) has five subunits: alpha(3), beta(3), gamma(1), delta(1), epsilon(1). CF(0) has three main subunits: a(1), b(2) and c(9-12). The alpha and beta chains form an alternating ring which encloses part of the gamma chain. CF(1) is attached to CF(0) by a central stalk formed by the gamma and epsilon chains, while a peripheral stalk is formed by the delta and b chains.

Its subcellular location is the cell membrane. It catalyses the reaction ATP + H2O + 4 H(+)(in) = ADP + phosphate + 5 H(+)(out). Produces ATP from ADP in the presence of a proton gradient across the membrane. The catalytic sites are hosted primarily by the beta subunits. This chain is ATP synthase subunit beta, found in Buchnera aphidicola subsp. Baizongia pistaciae (strain Bp).